Here is a 105-residue protein sequence, read N- to C-terminus: Putative membrane protein insertion efficiency factor (105 aa).

Residues 76-105 (GHPGGVDPVPPGPHETPRKTSTHDDEPPSR) are disordered. The span at 90–105 (ETPRKTSTHDDEPPSR) shows a compositional bias: basic and acidic residues.

It belongs to the UPF0161 family.

It localises to the cell inner membrane. In terms of biological role, could be involved in insertion of integral membrane proteins into the membrane. The protein is Putative membrane protein insertion efficiency factor of Chromohalobacter salexigens (strain ATCC BAA-138 / DSM 3043 / CIP 106854 / NCIMB 13768 / 1H11).